The following is an 89-amino-acid chain: MALTSEQKKSILAEYGLHETDTGSPEAQIAMLTNRINTLTEHLKFHKHDHHSRRGLLLLVGRRRGLLKYLADNNVDRYRDLIARLGLRR.

This sequence belongs to the universal ribosomal protein uS15 family. In terms of assembly, part of the 30S ribosomal subunit. Forms a bridge to the 50S subunit in the 70S ribosome, contacting the 23S rRNA.

Functionally, one of the primary rRNA binding proteins, it binds directly to 16S rRNA where it helps nucleate assembly of the platform of the 30S subunit by binding and bridging several RNA helices of the 16S rRNA. In terms of biological role, forms an intersubunit bridge (bridge B4) with the 23S rRNA of the 50S subunit in the ribosome. This chain is Small ribosomal subunit protein uS15, found in Corynebacterium efficiens (strain DSM 44549 / YS-314 / AJ 12310 / JCM 11189 / NBRC 100395).